Consider the following 527-residue polypeptide: Nucleobase-ascorbate transporter LPE1 (527 aa).

Transmembrane regions (helical) follow at residues 43-63 (LVMLGTTVLIATIIVPLMGGG), 68-88 (AIVIQTILFLSGINTLLQVHF), 92-112 (LPAVMSGSYTYIYPAVAIILS), 132-152 (LQGALIIAGVFQAVVGFFGIW), 163-183 (AAVPFVTLTGLGLFFFAFPGV), 189-209 (VGLPALVLLVIFAEYASHLFA), 219-239 (AVLVTVVIIWIYAEILTAAGA), 284-304 (FAMLAASFASLIESTGTLIAV), 361-383 (VIKISALFMIFFSLFAKFGAVLA), 387-409 (LPIFAALYCVLFAYSAGAGFSLL), 427-447 (LFLGLSIPQYFRVYEMFFGFG), and 458-478 (VMVNVIFSSPATVAAILAYLL).

The protein belongs to the nucleobase:cation symporter-2 (NCS2) (TC 2.A.40) family. As to expression, highly expressed in roots.

Its subcellular location is the membrane. With respect to regulation, inhibited by excess of xanthin, uric acid and ascorbic acid, and by 100 um N,N-dicyclohexylcarbodiimide and 30 um carbonyl cyanide m-chlorophenyl-hydrazone. Functionally, high affinity uric acid-xanthine transporter in A.nidulans. Binds, but cannot transport ascorbic acid. The sequence is that of Nucleobase-ascorbate transporter LPE1 (LPE1) from Zea mays (Maize).